The following is a 134-amino-acid chain: Protein Turandot E (134 aa).

A signal peptide spans 1 to 38; that stretch reads MSYNRTLHSTTSILKMNSALQISCLLLVLGCLLGSGHG.

Belongs to the Turandot family.

It is found in the secreted. In terms of biological role, a humoral factor that may play a role in stress tolerance. This chain is Protein Turandot E, found in Drosophila yakuba (Fruit fly).